The chain runs to 540 residues: Chaperonin GroEL 2 (540 aa).

ATP is bound by residues 29–32 (TMGP), lysine 50, 86–90 (DGTTT), glycine 414, and aspartate 496.

Belongs to the chaperonin (HSP60) family. In terms of assembly, forms a cylinder of 14 subunits composed of two heptameric rings stacked back-to-back. Interacts with the co-chaperonin GroES.

It is found in the cytoplasm. It catalyses the reaction ATP + H2O + a folded polypeptide = ADP + phosphate + an unfolded polypeptide.. Its function is as follows. Together with its co-chaperonin GroES, plays an essential role in assisting protein folding. The GroEL-GroES system forms a nano-cage that allows encapsulation of the non-native substrate proteins and provides a physical environment optimized to promote and accelerate protein folding. The protein is Chaperonin GroEL 2 of Rhodopirellula baltica (strain DSM 10527 / NCIMB 13988 / SH1).